The sequence spans 156 residues: Arginine repressor (156 aa).

This sequence belongs to the ArgR family.

The protein localises to the cytoplasm. The protein operates within amino-acid biosynthesis; L-arginine biosynthesis [regulation]. Functionally, regulates arginine biosynthesis genes. This chain is Arginine repressor, found in Shewanella halifaxensis (strain HAW-EB4).